The primary structure comprises 133 residues: MITDPIADYLTRIRNAIRARHRIVEIPASNLKKAMTELLHEKGYIKQYKFDDQPNKQGSIKIGLKYNPGTKTSPINKLERVSKPGLRKYVKASELPSVLNGLGIAILSTSKGIMSDKEARQMKLGGEVLCYIY.

This sequence belongs to the universal ribosomal protein uS8 family. Part of the 30S ribosomal subunit. Contacts proteins S5 and S12.

Its function is as follows. One of the primary rRNA binding proteins, it binds directly to 16S rRNA central domain where it helps coordinate assembly of the platform of the 30S subunit. This is Small ribosomal subunit protein uS8 from Amoebophilus asiaticus (strain 5a2).